Consider the following 64-residue polypeptide: DNA gyrase inhibitor YacG (64 aa).

4 residues coordinate Zn(2+): Cys9, Cys12, Cys28, and Cys32.

It belongs to the DNA gyrase inhibitor YacG family. In terms of assembly, interacts with GyrB. Zn(2+) serves as cofactor.

In terms of biological role, inhibits all the catalytic activities of DNA gyrase by preventing its interaction with DNA. Acts by binding directly to the C-terminal domain of GyrB, which probably disrupts DNA binding by the gyrase. In Enterobacter sp. (strain 638), this protein is DNA gyrase inhibitor YacG.